The sequence spans 265 residues: MEDRNNIYFFYKHTKSMQEAVEPLKQLATSQGLNVVDDVQKANIIVSVGGNNAFLQATRKTNFRSDCLYVGVSTDREGFYPDFTINEIDKMFEAFENQNIEVKRLSTLEVTIDDEKPFYCLNECSIRSNVIKTFVLEVFIDDMHFETFRGDGMIVSTPTGSTAYNKSVRGAVVDPRLPSLQVSEIASLNNNTYRTLGTSFLLSGDRTLRLKVVQDGNDFPIIGADNEALSIRHAEDIKIRLSDKQVKVLKLKDNTFWHKVQRNFL.

The active-site Proton acceptor is N51. NAD(+)-binding positions include 122–123 (NE), R149, D151, 162–167 (TAYNKS), A186, and N226.

Belongs to the NAD kinase family. A divalent metal cation is required as a cofactor.

It localises to the cytoplasm. The catalysed reaction is NAD(+) + ATP = ADP + NADP(+) + H(+). Involved in the regulation of the intracellular balance of NAD and NADP, and is a key enzyme in the biosynthesis of NADP. Catalyzes specifically the phosphorylation on 2'-hydroxyl of the adenosine moiety of NAD to yield NADP. The polypeptide is NAD kinase 2 (Halalkalibacterium halodurans (strain ATCC BAA-125 / DSM 18197 / FERM 7344 / JCM 9153 / C-125) (Bacillus halodurans)).